Consider the following 274-residue polypeptide: MSGTKIHPTAFVEEGAQLGENVSIGPFCHIGPQAVIGDGCCLMSHVVIMGNTILGANSKIFPHAILGGDPQNNKHKGGHTSLFIGKNCIIREGVTMHRGSDTCAGKTVIGDNCQFFSYAHVAHDCHVGHHVTFANNAMIGGHVTVGDYVIIGGGSAVHQFVRIGHHAFIGGVSALVGDLIPYGMAVGVQAKLAGLNIIGMKRAGLERKEIRSLRHAVSMLFDHSKPLRERVYDVFSFYSTSQSVVDIVNFIQEKGKRFYCTPRFENDTMCSNKD.

Belongs to the transferase hexapeptide repeat family. LpxA subfamily. In terms of assembly, homotrimer.

Its subcellular location is the cytoplasm. The enzyme catalyses a (3R)-hydroxyacyl-[ACP] + UDP-N-acetyl-alpha-D-glucosamine = a UDP-3-O-[(3R)-3-hydroxyacyl]-N-acetyl-alpha-D-glucosamine + holo-[ACP]. The protein operates within glycolipid biosynthesis; lipid IV(A) biosynthesis; lipid IV(A) from (3R)-3-hydroxytetradecanoyl-[acyl-carrier-protein] and UDP-N-acetyl-alpha-D-glucosamine: step 1/6. Functionally, involved in the biosynthesis of lipid A, a phosphorylated glycolipid that anchors the lipopolysaccharide to the outer membrane of the cell. The sequence is that of Acyl-[acyl-carrier-protein]--UDP-N-acetylglucosamine O-acyltransferase from Bartonella bacilliformis (strain ATCC 35685 / KC583 / Herrer 020/F12,63).